Reading from the N-terminus, the 477-residue chain is Ribulose bisphosphate carboxylase large chain (477 aa).

A propeptide spanning residues 1–2 (MS) is cleaved from the precursor. An N-acetylproline modification is found at Pro3. Substrate-binding residues include Asn123 and Thr173. Lys175 serves as the catalytic Proton acceptor. Position 177 (Lys177) interacts with substrate. 3 residues coordinate Mg(2+): Lys201, Asp203, and Glu204. The residue at position 201 (Lys201) is an N6-carboxylysine. His294 serves as the catalytic Proton acceptor. Residues Arg295, His327, and Ser379 each contribute to the substrate site.

This sequence belongs to the RuBisCO large chain family. Type I subfamily. In terms of assembly, heterohexadecamer of 8 large chains and 8 small chains; disulfide-linked. The disulfide link is formed within the large subunit homodimers. The cofactor is Mg(2+). The disulfide bond which can form in the large chain dimeric partners within the hexadecamer appears to be associated with oxidative stress and protein turnover.

It localises to the plastid. The protein resides in the chloroplast. The enzyme catalyses 2 (2R)-3-phosphoglycerate + 2 H(+) = D-ribulose 1,5-bisphosphate + CO2 + H2O. It catalyses the reaction D-ribulose 1,5-bisphosphate + O2 = 2-phosphoglycolate + (2R)-3-phosphoglycerate + 2 H(+). RuBisCO catalyzes two reactions: the carboxylation of D-ribulose 1,5-bisphosphate, the primary event in carbon dioxide fixation, as well as the oxidative fragmentation of the pentose substrate in the photorespiration process. Both reactions occur simultaneously and in competition at the same active site. The polypeptide is Ribulose bisphosphate carboxylase large chain (Avena sativa (Oat)).